The chain runs to 107 residues: Circadian clock oscillator protein KaiB (107 aa).

The protein belongs to the KaiB family. May undergo a major conformational rearrangment; in the free state forms homooligomers. When bound to KaiC switches to a monomeric thioredoxin-fold (KaiB(fs)). The active oscillator complex is probably KaiC(6):KaiB(6).

Its function is as follows. Component of the KaiBC clock protein complex, which constitutes the main circadian regulator in cyanobacteria; it may modify the ATPase activity of KaiC. May be a metamorphic protein which reversibly switches between an inactive tetrameric fold and a rare, thioredoxin-like monomeric fold (KaiB(fs)). KaiB(fs) binds phospho-KaiC, and perhaps clock output effectors. In Prochlorococcus marinus (strain NATL2A), this protein is Circadian clock oscillator protein KaiB.